A 107-amino-acid polypeptide reads, in one-letter code: EPIDERMAL PATTERNING FACTOR-like protein 5 (107 aa).

The signal sequence occupies residues 1 to 22 (MGVVLPTLIVYAFLLFFSSSSA). Disulfide bonds link Cys64–Cys98, Cys68–Cys74, and Cys71–Cys100.

The protein belongs to the plant cysteine rich small secretory peptide family. Epidermal patterning factor subfamily. In terms of assembly, interacts with ERECTA. In terms of tissue distribution, expressed asymetically in the hypocotyl, on the side proximal to the folded cotyledons at germination. Detected in developing flowers, the chalazal region of ovules and near the root apex, but not in inflorescence stems. Expressed in cotyledons, flowers, adult leaves and fruits.

It localises to the secreted. Its function is as follows. Controls stomatal patterning. Mediates differentiation of stomatal lineage cells to pavement cells and stomatal development inhibition. TMM (AC Q9SSD1) functions to dampen or block CLL1 signaling. Acts as a growth-regulatory ligand for ERECTA family receptors. Promotes fruit growth and fertility. This is EPIDERMAL PATTERNING FACTOR-like protein 5 from Arabidopsis thaliana (Mouse-ear cress).